The primary structure comprises 383 residues: Delta(12)-fatty-acid desaturase (383 aa).

The segment at 1 to 24 (MGAGGRMPVPTSSKKSETDTTKRV) is disordered. Positions 14 to 24 (KKSETDTTKRV) are enriched in basic and acidic residues. Residues 56 to 76 (LISDIIIASCFYYVATNYFSL) traverse the membrane as a helical segment. A Histidine box-1 motif is present at residues 105–109 (HECGH). Residues 117–137 (WLDDTVGLIFHSFLLVPYFSW) form a helical membrane-spanning segment. Positions 141–145 (HRRHH) match the Histidine box-2 motif. The next 3 membrane-spanning stretches (helical) occupy residues 179–199 (IMML…FNVS), 225–245 (IYLS…YAAA), and 252–272 (ICLY…ITYL). Positions 315-319 (HVAHH) match the Histidine box-3 motif.

Belongs to the fatty acid desaturase type 1 family. Homo- and heterodimer. Interacts with FAD3 but not with FAD6. FAD2-FAD3 heterodimers can form a metabolic channel in which 18:1-PC is converted to 18:3-PC without releasing a free 18:2-PC intermediate. Expressed in shoots and roots. Expressed in leaves, stems, flowers and siliques.

Its subcellular location is the endoplasmic reticulum membrane. The protein resides in the microsome membrane. It catalyses the reaction (9Z)-octadecenoyl-CoA + 2 Fe(II)-[cytochrome b5] + O2 + 2 H(+) = (9Z,12Z)-octadecadienoyl-CoA + 2 Fe(III)-[cytochrome b5] + 2 H2O. The catalysed reaction is (9Z)-hexadecenoyl-CoA + 2 Fe(II)-[cytochrome b5] + O2 + 2 H(+) = (9Z,12Z)-hexadecadienoyl-CoA + 2 Fe(III)-[cytochrome b5] + 2 H2O. It carries out the reaction a (9Z)-octadecenoyl-containing glycerolipid + 2 Fe(II)-[cytochrome b5] + O2 + 2 H(+) = a (9Z,12Z)-octadecadienoyl-containing glycerolipid + 2 Fe(III)-[cytochrome b5] + 2 H2O. The enzyme catalyses (9Z)-octadecenoyl-CoA + AH2 + O2 = (9Z,12Z)-octadecadienoyl-CoA + A + 2 H2O. It catalyses the reaction (9Z)-hexadecenoyl-CoA + AH2 + O2 = (9Z,12Z)-hexadecadienoyl-CoA + A + 2 H2O. The catalysed reaction is (9Z)-tetradecenoyl-CoA + 2 Fe(II)-[cytochrome b5] + O2 + 2 H(+) = (9Z,12Z)-tetradecadienoyl-CoA + 2 Fe(III)-[cytochrome b5] + 2 H2O. It carries out the reaction (9Z)-pentadecenoyl-CoA + 2 Fe(II)-[cytochrome b5] + O2 + 2 H(+) = (9Z,12Z)-pentadecadienoyl-CoA + 2 Fe(III)-[cytochrome b5] + 2 H2O. The enzyme catalyses (9Z)-heptadecenoyl-CoA + 2 Fe(II)-[cytochrome b5] + O2 + 2 H(+) = (9Z,12Z)-heptadecadienoyl-CoA + 2 Fe(III)-[cytochrome b5] + 2 H2O. It participates in lipid metabolism; polyunsaturated fatty acid biosynthesis. Functionally, ER (microsomal) omega-6 fatty acid desaturase introduces the second double bond in the biosynthesis of 18:3 fatty acids, important constituents of plant membranes. Delta(12)-desaturase with regioselectivity determined by the double bond (delta(9) position) and carboxyl group of the substrate. Can use both 16:1 and 18:1 fatty acids as substrates. It is thought to use cytochrome b5 as an electron donor and to act on fatty acids esterified to phosphatidylcholine (PC) and, possibly, other phospholipids. Very low constitutive hydroxylation activity. Required for desaturation of fatty acids present in extraplastidial membranes, including mitochondria. Required for salt tolerance during seed germination and early seedling growth. This Arabidopsis thaliana (Mouse-ear cress) protein is Delta(12)-fatty-acid desaturase.